A 256-amino-acid chain; its full sequence is Floral homeotic protein APETALA 1 (256 aa).

One can recognise an MADS-box domain in the interval M1–S61. The K-box domain occupies N88 to I178. A disordered region spans residues E184–I206.

As to quaternary structure, homodimer capable of binding to CArG-box sequences.

The protein resides in the nucleus. In terms of biological role, transcription factor that promotes early floral meristem identity in synergy with LEAFY. Displays a redundant function with CAULIFLOWER in the up-regulation of LEAFY. Required subsequently for the transition of an inflorescence meristem into a floral meristem, and for the normal development of sepals and petals in flowers. Regulates positively B class homeotic proteins. In Arabidopsis lyrata subsp. lyrata (Lyre-leaved rock-cress), this protein is Floral homeotic protein APETALA 1 (AP1).